A 511-amino-acid chain; its full sequence is Ribose import ATP-binding protein RbsA (511 aa).

2 consecutive ABC transporter domains span residues 9 to 245 (FEAK…VGRD) and 261 to 506 (LRAE…LPRR). Residue 41–48 (GENGAGKS) coordinates ATP.

Belongs to the ABC transporter superfamily. Ribose importer (TC 3.A.1.2.1) family. As to quaternary structure, the complex is composed of an ATP-binding protein (RbsA), two transmembrane proteins (RbsC) and a solute-binding protein (RbsB).

It is found in the cell inner membrane. It carries out the reaction D-ribose(out) + ATP + H2O = D-ribose(in) + ADP + phosphate + H(+). Its function is as follows. Part of the ABC transporter complex RbsABC involved in ribose import. Responsible for energy coupling to the transport system. In Rhodopirellula baltica (strain DSM 10527 / NCIMB 13988 / SH1), this protein is Ribose import ATP-binding protein RbsA.